Here is a 276-residue protein sequence, read N- to C-terminus: Glutamate 5-kinase (276 aa).

ATP is bound at residue Lys14. 3 residues coordinate substrate: Ser54, Asp141, and Asn157. ATP-binding positions include 177-178 and 219-225; these read SD and TGGMLTK.

The protein belongs to the glutamate 5-kinase family.

It is found in the cytoplasm. It carries out the reaction L-glutamate + ATP = L-glutamyl 5-phosphate + ADP. It participates in amino-acid biosynthesis; L-proline biosynthesis; L-glutamate 5-semialdehyde from L-glutamate: step 1/2. Catalyzes the transfer of a phosphate group to glutamate to form L-glutamate 5-phosphate. The sequence is that of Glutamate 5-kinase from Listeria welshimeri serovar 6b (strain ATCC 35897 / DSM 20650 / CCUG 15529 / CIP 8149 / NCTC 11857 / SLCC 5334 / V8).